The chain runs to 161 residues: Cyclic pyranopterin monophosphate synthase (161 aa).

Residues Leu78–His80 and Met116–Glu117 contribute to the substrate site. Residue Asp131 is part of the active site.

The protein belongs to the MoaC family. Homohexamer; trimer of dimers.

It carries out the reaction (8S)-3',8-cyclo-7,8-dihydroguanosine 5'-triphosphate = cyclic pyranopterin phosphate + diphosphate. Its pathway is cofactor biosynthesis; molybdopterin biosynthesis. In terms of biological role, catalyzes the conversion of (8S)-3',8-cyclo-7,8-dihydroguanosine 5'-triphosphate to cyclic pyranopterin monophosphate (cPMP). The sequence is that of Cyclic pyranopterin monophosphate synthase from Bordetella pertussis (strain Tohama I / ATCC BAA-589 / NCTC 13251).